A 540-amino-acid chain; its full sequence is Chaperonin GroEL (540 aa).

Residues 30-33, Lys51, 87-91, Gly415, 479-481, and Asp495 each bind ATP; these read TLGP, DGTTT, and NAA.

This sequence belongs to the chaperonin (HSP60) family. As to quaternary structure, forms a cylinder of 14 subunits composed of two heptameric rings stacked back-to-back. Interacts with the co-chaperonin GroES.

Its subcellular location is the cytoplasm. The enzyme catalyses ATP + H2O + a folded polypeptide = ADP + phosphate + an unfolded polypeptide.. Together with its co-chaperonin GroES, plays an essential role in assisting protein folding. The GroEL-GroES system forms a nano-cage that allows encapsulation of the non-native substrate proteins and provides a physical environment optimized to promote and accelerate protein folding. The protein is Chaperonin GroEL of Raoultella planticola (Klebsiella planticola).